The primary structure comprises 606 residues: DNA mismatch repair protein MutL (606 aa).

The disordered stretch occupies residues 350-371 (GWRPSAPSAPWTPEASPSRPYQ).

The protein belongs to the DNA mismatch repair MutL/HexB family.

Functionally, this protein is involved in the repair of mismatches in DNA. It is required for dam-dependent methyl-directed DNA mismatch repair. May act as a 'molecular matchmaker', a protein that promotes the formation of a stable complex between two or more DNA-binding proteins in an ATP-dependent manner without itself being part of a final effector complex. This chain is DNA mismatch repair protein MutL, found in Rhizobium rhizogenes (strain K84 / ATCC BAA-868) (Agrobacterium radiobacter).